A 413-amino-acid polypeptide reads, in one-letter code: MKCSWREGNKIQLLENGEQYYPAVFKAIGEAQERIILETFIWFEDNVGKQLHAALLAAAQRGVKAEVLLDGYGSPDLSDEFVNELTAAGVVFRYYDPRPRLFGMRTNVFRRMHRKIVVIDARIAFIGGLNYSSEHMSSYGPEAKQDYAVRLEGPIVEDILQFELENLPGQSAARRWWRRHHKAEENRQPGEAQVLLVWRDNEEHRDDIERHYLKMLTQAQREVIIANAYFFPGYRFLHALRKAARRGVRIKLIIQGEPDMPIVRVGARLLYNYLVKGGVQVFEYRRRPLHGKVALMDDHWATVGSSNLDPLSLSLNLEANVIIHDRHFNQTLRDNLNGIIAADCQQVDETMLPKRTWWNLTKSVLAFHFLRHFPALVGWLPAHTPRLTQVDPPAQPTMETQDRVETENTGVNP.

2 PLD phosphodiesterase domains span residues V108–H135 and R285–S312. Active-site residues include H113, K115, D120, H290, K292, and D297. The tract at residues T388–P413 is disordered.

The protein belongs to the phospholipase D family. Cardiolipin synthase subfamily. ClsB sub-subfamily.

Its subcellular location is the cell membrane. The enzyme catalyses 2 a 1,2-diacyl-sn-glycero-3-phospho-(1'-sn-glycerol) = a cardiolipin + glycerol. In terms of biological role, catalyzes the phosphatidyl group transfer from one phosphatidylglycerol molecule to another to form cardiolipin (CL) (diphosphatidylglycerol) and glycerol. In Shigella flexneri, this protein is Cardiolipin synthase B.